The chain runs to 643 residues: Alpha-dioxygenase 1 (643 aa).

Residue H167 is the Proton acceptor of the active site. D168 contributes to the Ca(2+) binding site. A heme b-binding site is contributed by H172. Ca(2+) is bound by residues T220, W222, D224, and S226. H392, R489, and R493 together coordinate heme b.

Belongs to the peroxidase family. Requires heme b as cofactor. It depends on Ca(2+) as a cofactor.

Functionally, alpha-dioxygenase that catalyzes the primary oxygenation step of a variety of 14-20 carbon fatty acids, containing up to three unsaturated bonds, into their corresponding 2R-hydroperoxides. Involved in the production of oxylipins that function in cell signaling, wound healing, and protection from infection. The lipid-derived signaling pathway is involved in the initial response of hot pepper plants to pathogen infection. In Capsicum annuum (Capsicum pepper), this protein is Alpha-dioxygenase 1.